The following is a 305-amino-acid chain: Methionyl-tRNA formyltransferase (305 aa).

111–114 (SLLP) is a (6S)-5,6,7,8-tetrahydrofolate binding site.

This sequence belongs to the Fmt family.

The enzyme catalyses L-methionyl-tRNA(fMet) + (6R)-10-formyltetrahydrofolate = N-formyl-L-methionyl-tRNA(fMet) + (6S)-5,6,7,8-tetrahydrofolate + H(+). Its function is as follows. Attaches a formyl group to the free amino group of methionyl-tRNA(fMet). The formyl group appears to play a dual role in the initiator identity of N-formylmethionyl-tRNA by promoting its recognition by IF2 and preventing the misappropriation of this tRNA by the elongation apparatus. In Campylobacter jejuni subsp. doylei (strain ATCC BAA-1458 / RM4099 / 269.97), this protein is Methionyl-tRNA formyltransferase.